The primary structure comprises 155 residues: Small ribosomal subunit protein uS7 (155 aa).

It belongs to the universal ribosomal protein uS7 family. Part of the 30S ribosomal subunit. Contacts proteins S9 and S11.

Its function is as follows. One of the primary rRNA binding proteins, it binds directly to 16S rRNA where it nucleates assembly of the head domain of the 30S subunit. Is located at the subunit interface close to the decoding center, probably blocks exit of the E-site tRNA. This chain is Small ribosomal subunit protein uS7, found in Thermosipho melanesiensis (strain DSM 12029 / CIP 104789 / BI429).